Here is a 526-residue protein sequence, read N- to C-terminus: MECVGVQNVGAMAVLTRPRLNRWSGGELCQEKSIFLAYEQYESKCNSSSGSDSCVVDKEDFADEEDYIKAGGSQLVFVQMQQKKDMDQQSKLSDELRQISAGQTVLDLVVIGCGPAGLALAAESAKLGLNVGLVGPDLPFTNNYGVWEDEFKDLGLQACIEHVWRDTIVYLDDDEPILIGRAYGRVSRHFLHEELLKRCVEAGVLYLNSKVDRIVEATNGQSLVECEGDVVIPCRFVTVASGAASGKFLQYELGSPRVSVQTAYGVEVEVDNNPFDPSLMVFMDYRDYLRHDAQSLEAKYPTFLYAMPMSPTRVFFEETCLASKDAMPFDLLKKKLMLRLNTLGVRIKEIYEEEWSYIPVGGSLPNTEQKTLAFGAAASMVHPATGYSVVRSLSEAPKCASVLANILRQHYSKNMLTSSSIPSISTQAWNTLWPQERKRQRSFFLFGLALILQLDIEGIRSFFRAFFRVPKWMWQGFLGSSLSSADLMLFAFYMFIIAPNDMRKGLIRHLLSDPTGATLIRTYLTF.

108-136 (LVVIGCGPAGLALAAESAKLGLNVGLVGP) provides a ligand contact to NAD(+). Helical transmembrane passes span 443–463 (FFLFGLALILQLDIEGIRSFF) and 477–497 (FLGSSLSSADLMLFAFYMFII).

This sequence belongs to the lycopene cyclase family.

It localises to the plastid. The protein resides in the chloroplast membrane. The enzyme catalyses a carotenoid psi-end group = a carotenoid epsilon-end group. It functions in the pathway carotenoid biosynthesis; alpha-zeacarotene biosynthesis. It participates in carotenoid biosynthesis; delta-carotene biosynthesis. Its function is as follows. Catalyzes the single cyclization reaction which converts lycopene to delta-carotene and neurosporene to alpha-zeacarotene. Required for lutein biosynthesis. The protein is Lycopene epsilon cyclase, chloroplastic of Solanum lycopersicum (Tomato).